A 448-amino-acid polypeptide reads, in one-letter code: MMDVNSSGRPDLYGHLRSLILPEVGRRLQDLSPDGGAHSVVSSWMPHLLSGFPEVTASPAPTWDAPPDNVSGCGEQINYGRVEKVVIGSILTLITLLTIAGNCLVVISVCFVKKLRQPSNYLIVSLALADLSVAVAVMPFVSVTDLIGGKWIFGHFFCNVFIAMDVMCCTASIMTLCVISIDRYLGITRPLTYPVRQNGKCMAKMILSVWLLSASITLPPLFGWAQNVNDDKVCLISQDFGYTIYSTAVAFYIPMSVMLFMYYQIYKAARKSAAKHKFSGFPRVQPESVISLNGVVKLQKEVEECANLSRLLKHERKNISIFKREQKAATTLGIIVGAFTVCWLPFFLLSTARPFICGTSCSCIPLWVERTCLWLGYANSLINPFIYAFFNRDLRTTYRSLLQCQYRNINRKLSAAGMHEALKLAERPERSEFVLQNCDHCGKKGHDT.

Residues 1–86 (MMDVNSSGRP…INYGRVEKVV (86 aa)) are Extracellular-facing. N-linked (GlcNAc...) asparagine glycosylation is found at asparagine 5 and asparagine 69. Residues 87–111 (IGSILTLITLLTIAGNCLVVISVCF) traverse the membrane as a helical segment. The Cytoplasmic portion of the chain corresponds to 112 to 121 (VKKLRQPSNY). The chain crosses the membrane as a helical span at residues 122-143 (LIVSLALADLSVAVAVMPFVSV). Residues 144–155 (TDLIGGKWIFGH) are Extracellular-facing. Residues 156-181 (FFCNVFIAMDVMCCTASIMTLCVISI) traverse the membrane as a helical segment. A disulfide bridge links cysteine 158 with cysteine 234. Aspartate 165 is a serotonin binding site. The Cytoplasmic portion of the chain corresponds to 182 to 201 (DRYLGITRPLTYPVRQNGKC). The chain crosses the membrane as a helical span at residues 202–222 (MAKMILSVWLLSASITLPPLF). The Extracellular portion of the chain corresponds to 223–240 (GWAQNVNDDKVCLISQDF). A helical transmembrane segment spans residues 241-263 (GYTIYSTAVAFYIPMSVMLFMYY). The Cytoplasmic portion of the chain corresponds to 264 to 329 (QIYKAARKSA…SIFKREQKAA (66 aa)). A helical transmembrane segment spans residues 330–355 (TTLGIIVGAFTVCWLPFFLLSTARPF). Over 356-366 (ICGTSCSCIPL) the chain is Extracellular. A helical transmembrane segment spans residues 367–390 (WVERTCLWLGYANSLINPFIYAFF). Topologically, residues 391–448 (NRDLRTTYRSLLQCQYRNINRKLSAAGMHEALKLAERPERSEFVLQNCDHCGKKGHDT) are cytoplasmic. A lipid anchor (S-palmitoyl cysteine) is attached at cysteine 404.

The protein belongs to the G-protein coupled receptor 1 family.

The protein localises to the cell membrane. Functionally, G-protein coupled receptor for 5-hydroxytryptamine (serotonin), a biogenic hormone that functions as a neurotransmitter, a hormone and a mitogen. Ligand binding causes a conformation change that triggers signaling via guanine nucleotide-binding proteins (G proteins) and modulates the activity of downstream effectors. HTR7 is coupled to G(s) G alpha proteins and mediates activation of adenylate cyclase activity. This Mus musculus (Mouse) protein is 5-hydroxytryptamine receptor 7 (Htr7).